The following is a 262-amino-acid chain: UDP-2,3-diacylglucosamine hydrolase (262 aa).

Mn(2+) is bound by residues Asp10, His12, Asp47, Asn86, His121, His218, and His220.

Belongs to the LpxH family. It depends on Mn(2+) as a cofactor.

The protein resides in the cell inner membrane. It localises to the cytoplasm. It catalyses the reaction UDP-2-N,3-O-bis[(3R)-3-hydroxytetradecanoyl]-alpha-D-glucosamine + H2O = 2-N,3-O-bis[(3R)-3-hydroxytetradecanoyl]-alpha-D-glucosaminyl 1-phosphate + UMP + 2 H(+). It participates in glycolipid biosynthesis; lipid IV(A) biosynthesis; lipid IV(A) from (3R)-3-hydroxytetradecanoyl-[acyl-carrier-protein] and UDP-N-acetyl-alpha-D-glucosamine: step 4/6. Its function is as follows. Hydrolyzes the pyrophosphate bond of UDP-2,3-diacylglucosamine to yield 2,3-diacylglucosamine 1-phosphate (lipid X) and UMP by catalyzing the attack of water at the alpha-P atom. Involved in the biosynthesis of lipid A, a phosphorylated glycolipid that anchors the lipopolysaccharide to the outer membrane of the cell. The chain is UDP-2,3-diacylglucosamine hydrolase from Porphyromonas gingivalis (strain ATCC BAA-308 / W83).